A 431-amino-acid polypeptide reads, in one-letter code: Glutamate-1-semialdehyde 2,1-aminomutase (431 aa).

N6-(pyridoxal phosphate)lysine is present on K267.

It belongs to the class-III pyridoxal-phosphate-dependent aminotransferase family. HemL subfamily. Homodimer. Pyridoxal 5'-phosphate serves as cofactor.

It is found in the cytoplasm. It carries out the reaction (S)-4-amino-5-oxopentanoate = 5-aminolevulinate. It participates in porphyrin-containing compound metabolism; protoporphyrin-IX biosynthesis; 5-aminolevulinate from L-glutamyl-tRNA(Glu): step 2/2. This Myxococcus xanthus (strain DK1622) protein is Glutamate-1-semialdehyde 2,1-aminomutase.